Consider the following 192-residue polypeptide: MAQLFFKYGAMNSGKSIEILKVANNYEEQKKPVLIFTSGMDTRDEVGYVSSRVGLRRRAVPIFDDTNIFDYVESCRQKPYCVLIDEVQFLTKAHVLQLANIVDTLDIPVMGFGLKNDFRNELFEGSKYMLLYADKIEEMKTICWFCHKKAIMNLRVDEQGKPIYDGEQIQIGGNETYYPVCRKCHQHPPLTV.

ATP-binding positions include 9–16 (GAMNSGKS) and 85–88 (DEVQ). The active-site Proton acceptor is E86. Zn(2+) contacts are provided by C143, C146, C181, and C184.

This sequence belongs to the thymidine kinase family. In terms of assembly, homotetramer.

It localises to the cytoplasm. The enzyme catalyses thymidine + ATP = dTMP + ADP + H(+). This chain is Thymidine kinase, found in Shouchella clausii (strain KSM-K16) (Alkalihalobacillus clausii).